The chain runs to 940 residues: Acetyl-coenzyme A synthetase (940 aa).

The signal sequence occupies residues 1–33 (MCCAIWSASRAPACSASQLSSSHAVRPSVVPDA). Residues 1-289 (MCCAIWSASR…VQRSVTRLTA (289 aa)) are unknown. Disordered regions lie at residues 70–127 (TARA…RPRC), 157–202 (VAPP…ADSA), and 224–274 (ASSQ…QQTC). Polar residues-rich tracts occupy residues 72 to 95 (RATTPSAVPNGASVSNSPCATAAS) and 107 to 120 (SSISNSRRGPTSGS). 2 stretches are compositionally biased toward low complexity: residues 184 to 202 (TAPPSSTADARAPRSADSA) and 224 to 245 (ASSQAAATPGSSNSGARGSGRS). Residues 258 to 274 (SSPTVQRNQTTVHQQTC) show a composition bias toward polar residues. Residues 290–940 (MSNPSHAEVP…SVFEAIRASK (651 aa)) form an acetyl-coenzyme A synthetase region. CoA contacts are provided by residues 480–483 (RRGK) and Thr599. ATP-binding positions include 675–677 (GEP), 699–704 (DTWWQT), Asp796, and Arg811. Ser819 lines the CoA pocket. ATP is bound at residue Arg822. Residues Val833, His835, and Val838 each coordinate Mg(2+). N6-acetyllysine is present on Lys906.

This sequence belongs to the ATP-dependent AMP-binding enzyme family. It depends on Mg(2+) as a cofactor. Post-translationally, acetylated on Lys-906 by Pat in the presence of acetyl-CoA as an acetyl donor and ATP. Acetylation results in the inactivation of the enzyme. Deacetylation by the SIR2-homolog deacetylase CobB is required to activate the enzyme.

The catalysed reaction is acetate + ATP + CoA = acetyl-CoA + AMP + diphosphate. Catalyzes the conversion of acetate into acetyl-CoA (AcCoA), an essential intermediate at the junction of anabolic and catabolic pathways. AcsA undergoes a two-step reaction. In the first half reaction, AcsA combines acetate with ATP to form acetyl-adenylate (AcAMP) intermediate. In the second half reaction, it can then transfer the acetyl group from AcAMP to the sulfhydryl group of CoA, forming the product AcCoA. The sequence is that of Acetyl-coenzyme A synthetase (acsA) from Mycolicibacterium smegmatis (strain ATCC 700084 / mc(2)155) (Mycobacterium smegmatis).